We begin with the raw amino-acid sequence, 374 residues long: Tetraacyldisaccharide 4'-kinase (374 aa).

Residue 59 to 66 (TAGGTGKT) coordinates ATP.

It belongs to the LpxK family.

The enzyme catalyses a lipid A disaccharide + ATP = a lipid IVA + ADP + H(+). Its pathway is glycolipid biosynthesis; lipid IV(A) biosynthesis; lipid IV(A) from (3R)-3-hydroxytetradecanoyl-[acyl-carrier-protein] and UDP-N-acetyl-alpha-D-glucosamine: step 6/6. Its function is as follows. Transfers the gamma-phosphate of ATP to the 4'-position of a tetraacyldisaccharide 1-phosphate intermediate (termed DS-1-P) to form tetraacyldisaccharide 1,4'-bis-phosphate (lipid IVA). The polypeptide is Tetraacyldisaccharide 4'-kinase (Elusimicrobium minutum (strain Pei191)).